We begin with the raw amino-acid sequence, 356 residues long: Peptide chain release factor 1 (356 aa).

Gln-235 carries the N5-methylglutamine modification.

It belongs to the prokaryotic/mitochondrial release factor family. Methylated by PrmC. Methylation increases the termination efficiency of RF1.

Its subcellular location is the cytoplasm. In terms of biological role, peptide chain release factor 1 directs the termination of translation in response to the peptide chain termination codons UAG and UAA. The protein is Peptide chain release factor 1 of Mycobacteroides abscessus (strain ATCC 19977 / DSM 44196 / CCUG 20993 / CIP 104536 / JCM 13569 / NCTC 13031 / TMC 1543 / L948) (Mycobacterium abscessus).